We begin with the raw amino-acid sequence, 256 residues long: uncharacterized protein (256 aa).

Positions 1–22 are cleaved as a signal peptide; sequence MGYLKRFALYISVMILIFAIAG. A lipid anchor (N-palmitoyl cysteine) is attached at C23. A lipid anchor (S-diacylglycerol cysteine) is attached at C23.

It belongs to the staphylococcal tandem lipoprotein family.

It localises to the cell membrane. This is an uncharacterized protein from Staphylococcus aureus (strain COL).